The sequence spans 791 residues: MGEERWVSLTPEEFDQLQKYSEYSSKKIKDALTEFNEGGSLKQYDPHEPISYDVFKLFMRAYLEVDLPQPLSTHLFLAFSQKPRHETSDHPTEGASNSEANSADTNIQNADNATKADEACAPDTESNMAEKQAPAEDQVAATPLEPPVPRSSSSESPVVYLKDVVCYLSLLETGRPQDKLEFMFRLYDSDENGLLDQAEMDCIVNQMLHIAQYLEWDPTELRPILKEMLQGMDYDRDGFVSLQEWVHGGMTTIPLLVLLGMDDSGSKGDGRHAWTMKHFKKPTYCNFCHIMLMGVRKQGLCCTYCKYTVHERCVSRNIPGCVKTYSKAKRSGEVMQHAWVEGNSSVKCDRCHKSIKCYQSVTARHCVWCRMTFHRKCELSTLCDGGELRDHILLPTSICPITRDRPGEKSDGCVSAKGELVMQYKIIPTPGTHPLLVLVNPKSGGRQGERILRKFHYLLNPKQVFNLDNGGPTPGLNFFRDTPDFRVLACGGDGTVGWILDCIDKANFAKHPPVAVLPLGTGNDLARCLRWGGGYEGGSLTKILKDIEQSPLVMLDRWHLEVIPREEVENGDQVPYSIMNNYFSIGVDASIAHRFHVMREKHPEKFNSRMKNKLWYFEFGTSETFAATCKKLHDHIELECDGVGVDLSNIFLEGIAILNIPSMYGGTNLWGENKKNRAVIRESRKGVTDPKELKFCVQDLSDQLLEVVGLEGAMEMGQIYTGLKSAGRRLAQCASVTIRTNKLLPMQVDGEPWMQPCCTIKITHKNQAPMMMGPPQKSSFFSLRRKSRSKD.

Disordered stretches follow at residues Lys82–Ala103 and Asp117–Ser154. Positions Pro83–Thr92 are enriched in basic and acidic residues. Residues Gly94 to Ala103 show a composition bias toward polar residues. 2 EF-hand domains span residues Arg175–Ile210 and Glu220–Leu255. Ca(2+)-binding residues include Asp188, Asp190, Asn192, Glu199, Asp233, Asp235, Asp237, and Glu244. 2 Phorbol-ester/DAG-type zinc fingers span residues Arg271 to Cys321 and Gln336 to Gly385. The region spanning Pro430–Pro564 is the DAGKc domain. A disordered region spans residues Ala768–Asp791.

The protein belongs to the eukaryotic diacylglycerol kinase family. In terms of tissue distribution, predominantly expressed in retina and in a much lesser extent in the brain. Other tissues contain extremely low levels of DGK-gamma.

Its subcellular location is the membrane. It is found in the cytoplasm. The protein localises to the cytosol. The protein resides in the cytoskeleton. It carries out the reaction a 1,2-diacyl-sn-glycerol + ATP = a 1,2-diacyl-sn-glycero-3-phosphate + ADP + H(+). The enzyme catalyses 1,2-didecanoyl-sn-glycerol + ATP = 1,2-didecanoyl-sn-glycero-3-phosphate + ADP + H(+). The catalysed reaction is 1-octadecanoyl-2-(5Z,8Z,11Z,14Z-eicosatetraenoyl)-sn-glycerol + ATP = 1-octadecanoyl-2-(5Z,8Z,11Z,14Z-eicosatetraenoyl)-sn-glycero-3-phosphate + ADP + H(+). It catalyses the reaction 1,2-di-(9Z-octadecenoyl)-sn-glycerol + ATP = 1,2-di-(9Z-octadecenoyl)-sn-glycero-3-phosphate + ADP + H(+). It carries out the reaction 1-octadecanoyl-2-(9Z,12Z)-octadecadienoyl-sn-glycerol + ATP = 1-octadecanoyl-2-(9Z,12Z-octadecadienoyl)-sn-glycero-3-phosphate + ADP + H(+). It participates in lipid metabolism; glycerolipid metabolism. The activity is calcium-dependent. Requires phosphatidylserine for maximal activity. In terms of biological role, diacylglycerol kinase that converts diacylglycerol/DAG into phosphatidic acid/phosphatidate/PA and regulates the respective levels of these two bioactive lipids. Thereby, acts as a central switch between the signaling pathways activated by these second messengers with different cellular targets and opposite effects in numerous biological processes. Has no apparent specificity with regard to the acyl compositions of diacylglycerol. Specifically expressed in the cerebellum where it controls the level of diacylglycerol which in turn regulates the activity of protein kinase C gamma. Through protein kinase C gamma, indirectly regulates the dendritic development of Purkinje cells, cerebellar long term depression and ultimately cerebellar motor coordination. The polypeptide is Diacylglycerol kinase gamma (DGKG) (Homo sapiens (Human)).